Consider the following 101-residue polypeptide: Putative pterin-4-alpha-carbinolamine dehydratase (101 aa).

The protein belongs to the pterin-4-alpha-carbinolamine dehydratase family.

It carries out the reaction (4aS,6R)-4a-hydroxy-L-erythro-5,6,7,8-tetrahydrobiopterin = (6R)-L-erythro-6,7-dihydrobiopterin + H2O. This Rhodopseudomonas palustris (strain BisA53) protein is Putative pterin-4-alpha-carbinolamine dehydratase.